A 492-amino-acid polypeptide reads, in one-letter code: 2-succinylbenzoate--CoA ligase (492 aa).

It belongs to the ATP-dependent AMP-binding enzyme family. MenE subfamily.

It catalyses the reaction 2-succinylbenzoate + ATP + CoA = 2-succinylbenzoyl-CoA + AMP + diphosphate. It participates in quinol/quinone metabolism; 1,4-dihydroxy-2-naphthoate biosynthesis; 1,4-dihydroxy-2-naphthoate from chorismate: step 5/7. It functions in the pathway quinol/quinone metabolism; menaquinone biosynthesis. Functionally, converts 2-succinylbenzoate (OSB) to 2-succinylbenzoyl-CoA (OSB-CoA). The protein is 2-succinylbenzoate--CoA ligase of Staphylococcus aureus (strain MRSA252).